The chain runs to 100 residues: NADH-quinone oxidoreductase subunit K (100 aa).

A run of 3 helical transmembrane segments spans residues 4 to 24, 29 to 49, and 63 to 83; these read ITYY…GVLV, LVVF…FVAF, and FFVI…VIAV.

It belongs to the complex I subunit 4L family. In terms of assembly, NDH-1 is composed of 14 different subunits. Subunits NuoA, H, J, K, L, M, N constitute the membrane sector of the complex.

It localises to the cell inner membrane. The enzyme catalyses a quinone + NADH + 5 H(+)(in) = a quinol + NAD(+) + 4 H(+)(out). Its function is as follows. NDH-1 shuttles electrons from NADH, via FMN and iron-sulfur (Fe-S) centers, to quinones in the respiratory chain. The immediate electron acceptor for the enzyme in this species is believed to be ubiquinone. Couples the redox reaction to proton translocation (for every two electrons transferred, four hydrogen ions are translocated across the cytoplasmic membrane), and thus conserves the redox energy in a proton gradient. The polypeptide is NADH-quinone oxidoreductase subunit K (Myxococcus xanthus (strain DK1622)).